The chain runs to 615 residues: DNA mismatch repair protein MutL (615 aa).

The disordered stretch occupies residues H362 to Y397. Low complexity predominate over residues P378–P391.

It belongs to the DNA mismatch repair MutL/HexB family.

In terms of biological role, this protein is involved in the repair of mismatches in DNA. It is required for dam-dependent methyl-directed DNA mismatch repair. May act as a 'molecular matchmaker', a protein that promotes the formation of a stable complex between two or more DNA-binding proteins in an ATP-dependent manner without itself being part of a final effector complex. In Escherichia fergusonii (strain ATCC 35469 / DSM 13698 / CCUG 18766 / IAM 14443 / JCM 21226 / LMG 7866 / NBRC 102419 / NCTC 12128 / CDC 0568-73), this protein is DNA mismatch repair protein MutL.